A 468-amino-acid chain; its full sequence is Purple acid phosphatase 10 (468 aa).

A signal peptide spans 1 to 25; the sequence is MGRVRKSDFGSIVLVLCCVLNSLLC. N-linked (GlcNAc...) asparagine glycans are attached at residues asparagine 95 and asparagine 113. Aspartate 167 lines the Fe cation pocket. Asparagine 175 carries N-linked (GlcNAc...) asparagine glycosylation. Fe cation-binding residues include aspartate 196 and tyrosine 199. Aspartate 196 provides a ligand contact to Zn(2+). Asparagine 233 contributes to the Zn(2+) binding site. Position 233 (asparagine 233) interacts with substrate. Asparagine 306 is a glycosylation site (N-linked (GlcNAc...) asparagine). Zn(2+) is bound at residue histidine 318. The Proton donor role is filled by histidine 328. Histidine 355 contacts Zn(2+). Residue 355 to 357 participates in substrate binding; that stretch reads HVH. Histidine 357 lines the Fe cation pocket. N-linked (GlcNAc...) asparagine glycosylation occurs at asparagine 428.

It belongs to the metallophosphoesterase superfamily. Purple acid phosphatase family. In terms of assembly, homodimer; disulfide-linked. Fe cation is required as a cofactor. Requires Zn(2+) as cofactor. As to expression, expressed in roots, stems, leaves, flowers and siliques.

The protein resides in the secreted. It localises to the cytoplasm. The catalysed reaction is a phosphate monoester + H2O = an alcohol + phosphate. The chain is Purple acid phosphatase 10 (PAP10) from Arabidopsis thaliana (Mouse-ear cress).